The sequence spans 628 residues: Basal cell adhesion molecule (628 aa).

The N-terminal stretch at 1–31 is a signal peptide; the sequence is MEPPDARAGARRAPRLLVLALLLAAPPGSKA. Ig-like V-type domains lie at 32–142 and 150–253; these read EVRL…ARLK and PEVS…RLDG. Residues 32–547 lie on the Extracellular side of the membrane; that stretch reads EVRLSVPPLV…GTVAPQTSQA (516 aa). Disulfide bonds link C53-C125, C172-C237, and C291-C337. 3 consecutive Ig-like C2-type domains span residues 254 to 355, 355 to 441, and 448 to 538; these read PSFS…KTLE, ELRV…RSFR, and PELK…FHFG. Residues N321, N330, and N378 are each glycosylated (N-linked (GlcNAc...) asparagine). Disulfide bonds link C384/C424 and C473/C522. A helical transmembrane segment spans residues 548-568; it reads GVAVMAVAISVALLLLVVAVF. Residues 569–628 are Cytoplasmic-facing; the sequence is YCMRRKGRPGCCQWGEKGSPPPGEPKLSHSGSQRPEQTGLLMGSASGGAKHGSGGFGDEC. Positions 580 to 628 are disordered; that stretch reads CQWGEKGSPPPGEPKLSHSGSQRPEQTGLLMGSASGGAKHGSGGFGDEC. Residues S596, S598, S600, and S621 each carry the phosphoserine modification. A compositionally biased stretch (gly residues) spans 613 to 628; sequence ASGGAKHGSGGFGDEC.

As to quaternary structure, homodimer. Interacts with ITGA4:ITGB1. Interacts with spectrins SPTA1 and SPTB1. Epinephrine-stimulated phosphorylation of Ser-621 by PKA enhances adhesion to laminin. Ser-621 can also be phosphorylated by AKT1.

The protein localises to the cell membrane. In terms of biological role, transmembrane glycoprotein that functions as both a receptor and an adhesion molecule playing a crucial role in cell adhesion, motility, migration and invasion. Extracellular domain enables binding to extracellular matrix proteins, such as laminin, integrin and other ligands while its intracellular domain interacts with cytoskeletal proteins like hemoglobin, facilitating cell signal transduction. Serves as a receptor for laminin alpha-5/LAMA5 to promote cell adhesion. Mechanistically, JAK2 induces BCAM phosphorylation and activates its adhesion to laminin by stimulating a Rap1/AKT signaling pathway in the absence of EPOR. This is Basal cell adhesion molecule (BCAM) from Bos taurus (Bovine).